Consider the following 268-residue polypeptide: Chymotrypsin-C (268 aa).

The N-terminal stretch at 1-16 (MLGITVLAAILACASS) is a signal peptide. A propeptide spans 17-29 (CGDPTFPPNLSAR) (activation peptide). Intrachain disulfides connect Cys-17–Cys-141, Cys-59–Cys-75, Cys-155–Cys-222, Cys-186–Cys-202, and Cys-212–Cys-243. A glycan (N-linked (GlcNAc...) asparagine) is linked at Asn-25. Residues 30 to 267 (VVGGEDAVPN…YIDWIKEKIQ (238 aa)) enclose the Peptidase S1 domain. His-74 acts as the Charge relay system in catalysis. N-linked (GlcNAc...) asparagine glycans are attached at residues Asn-79 and Asn-90. Asp-121 serves as the catalytic Charge relay system. Asn-182 is a glycosylation site (N-linked (GlcNAc...) asparagine). The active-site Charge relay system is the Ser-216.

The protein belongs to the peptidase S1 family. Elastase subfamily.

The enzyme catalyses Preferential cleavage: Leu-|-Xaa, Tyr-|-Xaa, Phe-|-Xaa, Met-|-Xaa, Trp-|-Xaa, Gln-|-Xaa, Asn-|-Xaa.. Its function is as follows. Regulates activation and degradation of trypsinogens and procarboxypeptidases by targeting specific cleavage sites within their zymogen precursors. Has chymotrypsin-type protease activity and hypocalcemic activity. Cleaves TRY4 and TRY5 and thereby inhibits their autoactivation. The protein is Chymotrypsin-C (Ctrc) of Mus musculus (Mouse).